Here is a 342-residue protein sequence, read N- to C-terminus: MRILGIETSCDETGVAIYDEEKGLIANQLYTQIALHADYGGVVPELASRDHIRKTAPLIQAALQQAGLEAKDIDGIAYTCGPGLVGALLVGSTIARSLAYAWNIKAIGVHHMEGHLLAPMLENNPPKFPFVALLVSGGHTQLVRVNAVGQYELLGESIDDAAGEAFDKTAKLLGLDYPGGSVLSRLAEQGNPERFFFPRPMTDRPGLDFSFSGLKTFAANTINQAIKQEGELTEQTKADIAYAFQQAVVDTLAIKCRRALKETGFKRLVIAGGVSANKQLRQSLADMMKQLKGEVFYPQPQFCTDNGAMIAYVGFLRLKQGEYSPLEIDVKPRWAMTELKAI.

The Fe cation site is built by histidine 111 and histidine 115. Substrate is bound by residues 134 to 138 (LVSGG), aspartate 167, glycine 180, and asparagine 277. Aspartate 305 provides a ligand contact to Fe cation.

This sequence belongs to the KAE1 / TsaD family. Fe(2+) is required as a cofactor.

The protein resides in the cytoplasm. The catalysed reaction is L-threonylcarbamoyladenylate + adenosine(37) in tRNA = N(6)-L-threonylcarbamoyladenosine(37) in tRNA + AMP + H(+). Required for the formation of a threonylcarbamoyl group on adenosine at position 37 (t(6)A37) in tRNAs that read codons beginning with adenine. Is involved in the transfer of the threonylcarbamoyl moiety of threonylcarbamoyl-AMP (TC-AMP) to the N6 group of A37, together with TsaE and TsaB. TsaD likely plays a direct catalytic role in this reaction. The protein is tRNA N6-adenosine threonylcarbamoyltransferase of Histophilus somni (strain 2336) (Haemophilus somnus).